An 82-amino-acid chain; its full sequence is Small ribosomal subunit protein uS17 (82 aa).

It belongs to the universal ribosomal protein uS17 family. As to quaternary structure, part of the 30S ribosomal subunit.

Functionally, one of the primary rRNA binding proteins, it binds specifically to the 5'-end of 16S ribosomal RNA. The protein is Small ribosomal subunit protein uS17 of Phenylobacterium zucineum (strain HLK1).